Consider the following 209-residue polypeptide: Transcription antitermination protein NusB (209 aa).

This sequence belongs to the NusB family.

Its function is as follows. Involved in transcription antitermination. Required for transcription of ribosomal RNA (rRNA) genes. Binds specifically to the boxA antiterminator sequence of the ribosomal RNA (rrn) operons. The protein is Transcription antitermination protein NusB of Cyanothece sp. (strain PCC 7425 / ATCC 29141).